Here is an 86-residue protein sequence, read N- to C-terminus: Small ribosomal subunit protein bS16 (86 aa).

It belongs to the bacterial ribosomal protein bS16 family.

This Mycoplasmoides gallisepticum (strain R(low / passage 15 / clone 2)) (Mycoplasma gallisepticum) protein is Small ribosomal subunit protein bS16.